Consider the following 75-residue polypeptide: Small ribosomal subunit protein bS18 (75 aa).

This sequence belongs to the bacterial ribosomal protein bS18 family. In terms of assembly, part of the 30S ribosomal subunit. Forms a tight heterodimer with protein bS6.

Functionally, binds as a heterodimer with protein bS6 to the central domain of the 16S rRNA, where it helps stabilize the platform of the 30S subunit. The chain is Small ribosomal subunit protein bS18 from Paracoccus denitrificans (strain Pd 1222).